The following is a 451-amino-acid chain: Protein naked cuticle homolog 2 (451 aa).

The segment at 1-108 is disordered; that stretch reads MGKLQSKHAA…PRGPGGQRLN (108 aa). Gly2 carries N-myristoyl glycine lipidation. The interval 2-173 is targeting to the basolateral cell membrane; it reads GKLQSKHAAA…GSSKTLRVKL (172 aa). 2 stretches are compositionally biased toward basic and acidic residues: residues 34 to 63 and 89 to 99; these read KGAEEAERRARDKQELPNGDPKEGPFREDQ and DGERAANREGP. The tract at residues 113–178 is interaction with DVL1, DVL2 and DVL3; the sequence is QCDVSVEEDD…LRVKLTVSPE (66 aa). The EF-hand domain maps to 119 to 154; that stretch reads EEDDRQEWTFTLYDFDNCGKVTREDMSSLMHTIYEV. Ca(2+)-binding residues include Asp132, Asp134, Lys138, and Asp143. 2 disordered regions span residues 162–237 and 256–408; these read SSGS…PYCV and YTSR…TVEH. Residues 180 to 215 are compositionally biased toward basic and acidic residues; the sequence is SSKRKEGPPAGQDREPTRCRMEGELAEEPRVADRRL. The tract at residues 300 to 385 is interaction with TGFA; that stretch reads QVLVEHVVPA…PPPPYGHKRY (86 aa). Residues 332–351 show a composition bias toward low complexity; that stretch reads KSPKGSGKPPGVPASSKSGK.

This sequence belongs to the NKD family. In terms of assembly, interacts with DVL1, DVL2, DVL3 and PPP2R3A. Interacts with RNF25 and TGFA (via cytoplasmic domain). Ubiquitinated, leading to rapid proteasomal degradation. Interaction with TGFA interferes with RNF25 binding and protects against ubiquitination mediated by RNF25. Expressed in kidney, lung, pancreas and spleen.

Its subcellular location is the cell membrane. It is found in the cytoplasm. The protein resides in the cytoplasmic vesicle. Functionally, cell autonomous antagonist of the canonical Wnt signaling pathway. May activate a second Wnt signaling pathway that controls planar cell polarity. Required for processing of TGFA and for targeting of TGFA to the basolateral membrane of polarized epithelial cells. The sequence is that of Protein naked cuticle homolog 2 (NKD2) from Homo sapiens (Human).